The chain runs to 112 residues: Large ribosomal subunit protein bL21 (112 aa).

This sequence belongs to the bacterial ribosomal protein bL21 family. In terms of assembly, part of the 50S ribosomal subunit. Contacts protein L20.

In terms of biological role, this protein binds to 23S rRNA in the presence of protein L20. This chain is Large ribosomal subunit protein bL21, found in Buchnera aphidicola subsp. Baizongia pistaciae (strain Bp).